Here is a 107-residue protein sequence, read N- to C-terminus: Large ribosomal subunit protein eL33B (107 aa).

A2 is subject to N-acetylalanine; partial. Residue K47 forms a Glycyl lysine isopeptide (Lys-Gly) (interchain with G-Cter in ubiquitin) linkage.

The protein belongs to the eukaryotic ribosomal protein eL33 family. In terms of assembly, component of the large ribosomal subunit (LSU). Mature yeast ribosomes consist of a small (40S) and a large (60S) subunit. The 40S small subunit contains 1 molecule of ribosomal RNA (18S rRNA) and 33 different proteins (encoded by 57 genes). The large 60S subunit contains 3 rRNA molecules (25S, 5.8S and 5S rRNA) and 46 different proteins (encoded by 81 genes). Post-translationally, N-terminally acetylated by acetyltransferase NatA.

It is found in the cytoplasm. Its function is as follows. Component of the ribosome, a large ribonucleoprotein complex responsible for the synthesis of proteins in the cell. The small ribosomal subunit (SSU) binds messenger RNAs (mRNAs) and translates the encoded message by selecting cognate aminoacyl-transfer RNA (tRNA) molecules. The large subunit (LSU) contains the ribosomal catalytic site termed the peptidyl transferase center (PTC), which catalyzes the formation of peptide bonds, thereby polymerizing the amino acids delivered by tRNAs into a polypeptide chain. The nascent polypeptides leave the ribosome through a tunnel in the LSU and interact with protein factors that function in enzymatic processing, targeting, and the membrane insertion of nascent chains at the exit of the ribosomal tunnel. This chain is Large ribosomal subunit protein eL33B, found in Saccharomyces cerevisiae (strain ATCC 204508 / S288c) (Baker's yeast).